Here is a 181-residue protein sequence, read N- to C-terminus: Inner membrane-spanning protein YciB (181 aa).

5 helical membrane-spanning segments follow: residues 10-30, 50-70, 72-92, 118-138, and 148-168; these read LIIF…GALI, MHLI…ILHD, SFIK…LGVS, VTWY…YVAF, and FKVF…VLYL.

It belongs to the YciB family.

It localises to the cell inner membrane. Plays a role in cell envelope biogenesis, maintenance of cell envelope integrity and membrane homeostasis. The sequence is that of Inner membrane-spanning protein YciB from Shewanella halifaxensis (strain HAW-EB4).